Consider the following 113-residue polypeptide: Nitrogenase-stabilizing/protective protein NifW (113 aa).

It belongs to the NifW family. As to quaternary structure, homotrimer; associates with NifD.

May protect the nitrogenase Fe-Mo protein from oxidative damage. This chain is Nitrogenase-stabilizing/protective protein NifW, found in Dechloromonas aromatica (strain RCB).